We begin with the raw amino-acid sequence, 465 residues long: Gamma-aminobutyric acid receptor subunit rho-2 (465 aa).

The first 20 residues, 1-20 (MPYFMRLALFLFCLMALVES), serve as a signal peptide directing secretion. Residues 21-260 (RKPRRKRWTG…LYINFTLRRH (240 aa)) are Extracellular-facing. A 4-aminobutanoate-binding site is contributed by R105. A glycan (N-linked (GlcNAc...) asparagine) is linked at N120. S169 is a binding site for 4-aminobutanoate. C178 and C192 are disulfide-bonded. E197 is a binding site for 4-aminobutanoate. The N-linked (GlcNAc...) asparagine glycan is linked to N254. The helical transmembrane segment at 261-281 (IFFFLLQTYFPATLMVMLSWV) threads the bilayer. The Cytoplasmic portion of the chain corresponds to 282 to 293 (SFWIDHRAVPAR). Residues 294–314 (VSLGIMTVLTMSTIITGVNAS) traverse the membrane as a helical segment. The Extracellular segment spans residues 315-325 (MPRVSYIRAVD). A helical membrane pass occupies residues 326–346 (IYLWVSFVFVFLSVLEYAAVN). The Cytoplasmic portion of the chain corresponds to 347 to 443 (YLTTVQEQKE…IFQNTHAIDK (97 aa)). Residues 444-464 (YSRLIFPAFYIVFNLIYWSVF) traverse the membrane as a helical segment. Position 465 (S465) is a topological domain, extracellular.

The protein belongs to the ligand-gated ion channel (TC 1.A.9) family. Gamma-aminobutyric acid receptor (TC 1.A.9.5) subfamily. GABRR2 sub-subfamily. In terms of assembly, three rho subunits (rho-1/GBRR1, rho-2/GBRR2 and rho-3/GBRR3) coassemble either to form functional homopentamers or heteropentamers. Rho-2 is unable to form a functional homopentamer. Interacts with SQSTM1. In terms of tissue distribution, expressed in spinal cord and in cerebellum. Expressed in retina.

The protein localises to the postsynaptic cell membrane. The protein resides in the cell membrane. It catalyses the reaction chloride(in) = chloride(out). With respect to regulation, in contrast with rho-1 and rho-3 homopentamers, rho-2 GABAARs are not inhibited by picrotoxin. Rho subunit of the pentameric ligand-gated chloride channels responsible for mediating the effects of gamma-aminobutyric acid (GABA), the major inhibitory neurotransmitter in the brain. Rho-containing GABA-gated chloride channels are a subclass of GABA(A) receptors (GABAARs) entirely composed of rho subunits, where GABA molecules bind at the rho intersubunit interfaces. When activated by GABA, rho-GABAARs selectively allow the flow of chloride anions across the cell membrane down their electrochemical gradient. Rho-2 GABAARs may contribute to the regulation of glial development in the cerebellum by controlling extrasynaptic transmission. Rho-2 GABAARs are also involved in neuronal tonic (extrasynaptic) and phasic (synaptic) transmission in the Purkinje neurons of the cerebellum. Rho-2 GABAARs expressed in retina may play a role in retinal neurotransmission. The protein is Gamma-aminobutyric acid receptor subunit rho-2 of Rattus norvegicus (Rat).